Consider the following 352-residue polypeptide: Protein NDRG4 (352 aa).

Ser-298, Ser-317, and Ser-323 each carry phosphoserine. The segment at 301–352 (AVPSASMTRLARSRTASLTSASSVDGSRPQPCTHSDSSEGMGQVNHTMEVSC) is disordered. A compositionally biased stretch (low complexity) spans 308 to 323 (TRLARSRTASLTSASS). Over residues 330 to 352 (QPCTHSDSSEGMGQVNHTMEVSC) the composition is skewed to polar residues.

The protein belongs to the NDRG family. As to expression, expressed in the brain and heart, weakly in the kidney; most prominently in postnatal brain where it is expressed widely in the olfactory bulb, cerebral cortex, hippocampus, cerebellum, thalamus, and medulla oblongata.

The protein resides in the cytoplasm. It is found in the cytosol. In terms of biological role, contributes to the maintenance of intracerebral BDNF levels within the normal range, which is necessary for the preservation of spatial learning and the resistance to neuronal cell death caused by ischemic stress. May enhance growth factor-induced ERK1 and ERK2 phosphorylation, including that induced by NGF. May attenuate NGF-promoted ELK1 phosphorylation in a microtubule-dependent manner. The sequence is that of Protein NDRG4 (Ndrg4) from Rattus norvegicus (Rat).